We begin with the raw amino-acid sequence, 257 residues long: Homeobox protein ceh-36 (257 aa).

The segment covering 33–49 (SATTSSTTMAPMAPNSE) has biased composition (low complexity). 2 disordered regions span residues 33 to 63 (SATTSSTTMAPMAPNSESGRRAGRRERTSFN) and 113 to 156 (DRNN…GTPE). A DNA-binding region (homeobox) is located at residues 55–117 (GRRERTSFNR…NRRAKDRNNK (63 aa)). Residues 123–137 (HPGSTSSRSSNGSPH) are compositionally biased toward low complexity.

Belongs to the paired homeobox family. As to quaternary structure, interacts with sox-2. In terms of tissue distribution, expressed in ASE and AWC chemosensory neurons. Expressed left-right asymmetrically in the embryo, in the grandmother cell and the mother cell to the MI pharyngeal motorneuron but in neither analogous precursors of the e3D neuron.

It localises to the nucleus. In terms of biological role, probable transcription factor, acting as a progenitor identity factor regulating the development of lineally-related embryonic cells including glial, excretory and neuronal cells. Mediates chemosensory function of ASE and AWC neurons. In ASE neurons, required to diversify the fate of the ASEL neurons from the ASER neurons. Acts cell-autonomously to establish a neuronal left right asymmetry, possibly promoting asymmetric expression of the helix-loop-helix proteins ngn-1 and hlh-2. In cooperation with the transcription factor sox-2, required for the differentiation of AWC olfactory neurons. May regulate the expression of sox-2 in AWC olfactory neurons. The polypeptide is Homeobox protein ceh-36 (Caenorhabditis elegans).